The primary structure comprises 548 residues: Membrane protein insertase YidC (548 aa).

The chain crosses the membrane as a helical span at residues 6-26 (NLLVIALLFVSFMIWQAWEQD). Positions 28 to 56 (NPQPQTQQTTQTTTTAAGSAADQGVPASG) are disordered. Positions 29–42 (PQPQTQQTTQTTTT) are enriched in low complexity. Helical transmembrane passes span 350-370 (FVGN…GIMY), 424-444 (FPLI…MGSI), 458-478 (LSAQ…MFFI), and 499-519 (PVIF…YYIV).

It belongs to the OXA1/ALB3/YidC family. Type 1 subfamily. Interacts with the Sec translocase complex via SecD. Specifically interacts with transmembrane segments of nascent integral membrane proteins during membrane integration.

The protein resides in the cell inner membrane. Required for the insertion and/or proper folding and/or complex formation of integral membrane proteins into the membrane. Involved in integration of membrane proteins that insert both dependently and independently of the Sec translocase complex, as well as at least some lipoproteins. Aids folding of multispanning membrane proteins. This chain is Membrane protein insertase YidC, found in Salmonella heidelberg (strain SL476).